Here is a 195-residue protein sequence, read N- to C-terminus: Keratin-associated protein 4-3 (195 aa).

A run of 28 repeats spans residues 34-38 (CCRTT), 39-43 (CCRPS), 44-48 (CCISS), 49-53 (CCRPS), 54-58 (CCISS), 59-63 (CCKPS), 64-68 (CCRTT), 69-73 (CCRPS), 74-78 (CCISS), 79-83 (CCRPS), 84-88 (CCISS), 89-93 (CCKPS), 94-98 (CCRTT), 99-103 (CCRPS), 104-108 (CCISS), 109-113 (CCRPS), 114-118 (CCISS), 119-123 (CCKPS), 124-128 (CCQTT), 129-133 (CCRPS), 134-138 (CCISS), 144-148 (CCQPS), 149-153 (CCRPA), 154-158 (CCISS), 159-163 (CCHPS), 164-168 (CCVSS), 179-183 (CCRTT), and 189-193 (CCGSS). The segment at 34–193 (CCRTTCCRPS…CFHPICCGSS (160 aa)) is 29 X 5 AA repeats of C-C-[GIKRQVH]-[SPT]-[STA].

The protein belongs to the KRTAP type 4 family. As to quaternary structure, interacts with hair keratins. Expressed specifically in the middle/uper portions of the hair cortex. Not detected in the hair matrix or cuticle.

Functionally, in the hair cortex, hair keratin intermediate filaments are embedded in an interfilamentous matrix, consisting of hair keratin-associated proteins (KRTAP), which are essential for the formation of a rigid and resistant hair shaft through their extensive disulfide bond cross-linking with abundant cysteine residues of hair keratins. The matrix proteins include the high-sulfur and high-glycine-tyrosine keratins. The protein is Keratin-associated protein 4-3 (KRTAP4-3) of Homo sapiens (Human).